Consider the following 229-residue polypeptide: ATPase SWSAP1 (229 aa).

The disordered stretch occupies residues proline 209–proline 229.

Interacts with ZSWIM7; they form a functional complex involved in homologous recombination repair and stabilize each other. Interacts with RAD51, RAD51B, RAD51C, RAD51D and XRCC3; involved in homologous recombination repair.

It localises to the nucleus. In terms of biological role, ATPase which is preferentially stimulated by single-stranded DNA and is involved in homologous recombination repair (HRR). Has a DNA-binding activity which is independent of its ATPase activity. This is ATPase SWSAP1 (SWSAP1) from Homo sapiens (Human).